A 493-amino-acid chain; its full sequence is Ectonucleoside triphosphate diphosphohydrolase 8 (493 aa).

At 1–7 (MEYKGKV) the chain is on the cytoplasmic side. A helical transmembrane segment spans residues 8-28 (VAGLLTATCVFSIIALILSAV). At 29-463 (DVKDVFLPPG…ALEHVKGHEP (435 aa)) the chain is on the extracellular side. 3 N-linked (GlcNAc...) asparagine glycosylation sites follow: Asn65, Asn79, and Asn133. An intrachain disulfide couples Cys76 to Cys100. Catalysis depends on Glu166, which acts as the Proton acceptor. Residues Asn223, Asn234, Asn267, Asn324, Asn330, Asn361, Asn372, Asn382, and Asn445 are each glycosylated (N-linked (GlcNAc...) asparagine). An intrachain disulfide couples Cys244 to Cys291. A disulfide bridge connects residues Cys327 and Cys333. Cys379 and Cys401 form a disulfide bridge. A helical transmembrane segment spans residues 464-486 (SLWAGAISFIVLAIVAGLVAILL). The Cytoplasmic portion of the chain corresponds to 487-493 (QCFWKSK).

Belongs to the GDA1/CD39 NTPase family. It depends on Ca(2+) as a cofactor. Requires Mg(2+) as cofactor. Post-translationally, N-glycosylated.

Its subcellular location is the cell membrane. The enzyme catalyses a ribonucleoside 5'-triphosphate + 2 H2O = a ribonucleoside 5'-phosphate + 2 phosphate + 2 H(+). Its function is as follows. Canalicular ectonucleoside NTPDase responsible for the main hepatic NTPDase activity. Ectonucleoside ATPases catalyze the hydrolysis of gamma- and beta-phosphate residues of nucleotides, playing a central role in concentration of extracellular nucleotides. The sequence is that of Ectonucleoside triphosphate diphosphohydrolase 8 (ENTPD8) from Gallus gallus (Chicken).